Consider the following 40-residue polypeptide: Putative NAD(P)-dependent glyceraldehyde-3-phosphate dehydrogenase PS5 (40 aa).

The chain is Putative NAD(P)-dependent glyceraldehyde-3-phosphate dehydrogenase PS5 from Pinus strobus (Eastern white pine).